We begin with the raw amino-acid sequence, 667 residues long: Autophagy-related protein 20 (667 aa).

The tract at residues 1 to 94 (MKQKKNRFGS…DESFKSTRAN (94 aa)) is disordered. The span at 38–47 (SSSSRSSSTQ) shows a compositional bias: low complexity. Residues 55 to 67 (SLASVHTSDMHQS) are compositionally biased toward polar residues. Residues 76 to 85 (DDNPFLDQDD) are compositionally biased toward acidic residues. Residues 185-331 (KLINDRVQIL…DFLDPNNINW (147 aa)) form the PX domain. Positions 222, 224, 248, and 297 each coordinate a 1,2-diacyl-sn-glycero-3-phospho-(1D-myo-inositol-3-phosphate). Residues 524-562 (ELQRGVQPRNGNTASGASGNDESSVKKPQASKSQSSSYG) are disordered. Over residues 532–545 (RNGNTASGASGNDE) the composition is skewed to polar residues. The segment covering 549 to 560 (KKPQASKSQSSS) has biased composition (low complexity). Residues 588-652 (QTTMANLIKE…SKYLKDYAKK (65 aa)) adopt a coiled-coil conformation.

It belongs to the sorting nexin family.

It localises to the endosome membrane. It is found in the preautophagosomal structure membrane. Functionally, required for cytoplasm to vacuole transport (Cvt), pexophagy and mitophagy. Also involved in endoplasmic reticulum-specific autophagic process and is essential for the survival of cells subjected to severe ER stress. Functions in protein retrieval from the endocytic pathway. The polypeptide is Autophagy-related protein 20 (ATG20) (Vanderwaltozyma polyspora (strain ATCC 22028 / DSM 70294 / BCRC 21397 / CBS 2163 / NBRC 10782 / NRRL Y-8283 / UCD 57-17) (Kluyveromyces polysporus)).